Reading from the N-terminus, the 430-residue chain is Histidine--tRNA ligase (430 aa).

Belongs to the class-II aminoacyl-tRNA synthetase family. Homodimer.

It is found in the cytoplasm. It catalyses the reaction tRNA(His) + L-histidine + ATP = L-histidyl-tRNA(His) + AMP + diphosphate + H(+). The chain is Histidine--tRNA ligase from Chlamydia caviae (strain ATCC VR-813 / DSM 19441 / 03DC25 / GPIC) (Chlamydophila caviae).